Reading from the N-terminus, the 495-residue chain is Lanosterol 14-alpha demethylase erg11 (495 aa).

The chain crosses the membrane as a helical span at residues 2-22 (AFSLVSILLSIALAWYVGYII). C442 provides a ligand contact to heme.

Belongs to the cytochrome P450 family. In terms of assembly, interacts with dap1. Requires heme as cofactor.

It is found in the endoplasmic reticulum. Its subcellular location is the membrane. It carries out the reaction a 14alpha-methyl steroid + 3 reduced [NADPH--hemoprotein reductase] + 3 O2 = a Delta(14) steroid + formate + 3 oxidized [NADPH--hemoprotein reductase] + 4 H2O + 4 H(+). The catalysed reaction is a 14alpha-methyl steroid + reduced [NADPH--hemoprotein reductase] + O2 = a 14alpha-hydroxymethyl steroid + oxidized [NADPH--hemoprotein reductase] + H2O + H(+). The enzyme catalyses a 14alpha-hydroxymethyl steroid + reduced [NADPH--hemoprotein reductase] + O2 = a 14alpha-formyl steroid + oxidized [NADPH--hemoprotein reductase] + 2 H2O + H(+). It catalyses the reaction a 14alpha-formyl steroid + reduced [NADPH--hemoprotein reductase] + O2 = a Delta(14) steroid + formate + oxidized [NADPH--hemoprotein reductase] + H2O + 2 H(+). It carries out the reaction lanosterol + 3 reduced [NADPH--hemoprotein reductase] + 3 O2 = 4,4-dimethyl-5alpha-cholesta-8,14,24-trien-3beta-ol + formate + 3 oxidized [NADPH--hemoprotein reductase] + 4 H2O + 4 H(+). The catalysed reaction is lanosterol + reduced [NADPH--hemoprotein reductase] + O2 = 32-hydroxylanosterol + oxidized [NADPH--hemoprotein reductase] + H2O + H(+). The enzyme catalyses 32-hydroxylanosterol + reduced [NADPH--hemoprotein reductase] + O2 = 32-oxolanosterol + oxidized [NADPH--hemoprotein reductase] + 2 H2O + H(+). It catalyses the reaction 32-oxolanosterol + reduced [NADPH--hemoprotein reductase] + O2 = 4,4-dimethyl-5alpha-cholesta-8,14,24-trien-3beta-ol + formate + oxidized [NADPH--hemoprotein reductase] + H2O + 2 H(+). It carries out the reaction eburicol + 3 reduced [NADPH--hemoprotein reductase] + 3 O2 = 14-demethyleburicol + formate + 3 oxidized [NADPH--hemoprotein reductase] + 4 H2O + 4 H(+). The catalysed reaction is eburicol + reduced [NADPH--hemoprotein reductase] + O2 = 32-hydroxyeburicol + oxidized [NADPH--hemoprotein reductase] + H2O + H(+). The enzyme catalyses 32-hydroxyeburicol + reduced [NADPH--hemoprotein reductase] + O2 = 32-oxoeburicol + oxidized [NADPH--hemoprotein reductase] + 2 H2O + H(+). It catalyses the reaction 32-oxoeburicol + reduced [NADPH--hemoprotein reductase] + O2 = 14-demethyleburicol + formate + oxidized [NADPH--hemoprotein reductase] + H2O + 2 H(+). It functions in the pathway steroid biosynthesis; zymosterol biosynthesis; zymosterol from lanosterol: step 1/6. It participates in steroid metabolism; ergosterol biosynthesis. Sterol 14alpha-demethylase that plays a critical role in the third module of ergosterol biosynthesis pathway, being ergosterol the major sterol component in fungal membranes that participates in a variety of functions. The third module or late pathway involves the ergosterol synthesis itself through consecutive reactions that mainly occur in the endoplasmic reticulum (ER) membrane. In filamentous fungi, during the initial step of this module, lanosterol (lanosta-8,24-dien-3beta-ol) can be metabolized to eburicol. Sterol 14alpha-demethylase catalyzes the three-step oxidative removal of the 14alpha-methyl group (C-32) of both these sterols in the form of formate, and converts eburicol and lanosterol to 14-demethyleburicol (4,4,24-trimethylergosta-8,14,24(28)-trienol) and 4,4-dimethyl-5alpha-cholesta-8,14,24-trien-3beta-ol, respectively, which are further metabolized by other enzymes in the pathway to ergosterol. Can also use substrates not intrinsic to fungi, such as 24,25-dihydrolanosterol (DHL), producing 4,4-dimethyl-8,14-cholestadien-3-beta-ol, but at lower rates than the endogenous substrates. The chain is Lanosterol 14-alpha demethylase erg11 from Schizosaccharomyces pombe (strain 972 / ATCC 24843) (Fission yeast).